Consider the following 559-residue polypeptide: MNNLGNFGVWGFGFFSLSIWFAVLQQANGLRPIRETARSWGDEWLFGKKEKGGAGPFSAWNITGTYRGTWKFLDTVNSSSKFPDFRKESGNSVIELVTSPTKITGVHYVQGAVVFHDVFDNEHNVGGAQIKVEGVYIWPFRQLRLVANSGKKSDSGLEDDYLLSNPYHLLGIFSSQVFQESPRDRILKQKTSPIYEMEKHCNIEIAAQISQSTSSENNGDKDRYQIEGLMESPAVDDEVDCFSPLSLNATSINVEVYYNKAVNYTLMVTFVSFLQVLLLIRQMEHSNTQSGAAKVSIVMIGQQAIMDSYLCLLHLTAGILVESLFNAFATAAFFKFVVFSIFEMRYLLSIWKATRPSTSGEGWETMRRELSFLYSRFYGILLGGILLMYEFHNYMRPILLLMYSFWIPQIVANVVRDSRKPLHPYYILGMTVTRLAIPLYVFGCPKNFMRVEPSKAWCVSLCAFMGFQAGVLLLQHYFGSRCFVPRKLLPEKYSYYRRLDHNVNRSRDCVICMTTIDLRHRINDCMVTPCEHIFHSGCLQRWMDIKMECPTCRRPLPPA.

Residues methionine 1 to glycine 29 form the signal peptide. The Lumenal portion of the chain corresponds to leucine 30–asparagine 259. The helical transmembrane segment at lysine 260–isoleucine 280 threads the bilayer. Topologically, residues arginine 281 to lysine 294 are cytoplasmic. The helical transmembrane segment at valine 295 to leucine 315 threads the bilayer. Residues threonine 316 to glycine 318 are Lumenal-facing. The chain crosses the membrane as a helical span at residues isoleucine 319–phenylalanine 339. The Cytoplasmic segment spans residues serine 340 to leucine 370. Residues serine 371–phenylalanine 391 form a helical membrane-spanning segment. Topologically, residues histidine 392–tyrosine 394 are lumenal. The chain crosses the membrane as a helical span at residues methionine 395–valine 415. Residues arginine 416 to histidine 423 lie on the Cytoplasmic side of the membrane. The helical transmembrane segment at proline 424–cysteine 444 threads the bilayer. The Lumenal portion of the chain corresponds to proline 445 to cysteine 458. The helical transmembrane segment at valine 459–glycine 479 threads the bilayer. Residues serine 480–alanine 559 lie on the Cytoplasmic side of the membrane. The RING-type; atypical zinc-finger motif lies at cysteine 509 to arginine 553.

As to expression, highly expressed in stems. Expressed in root xylem and seed coat.

It localises to the endomembrane system. It carries out the reaction S-ubiquitinyl-[E2 ubiquitin-conjugating enzyme]-L-cysteine + [acceptor protein]-L-lysine = [E2 ubiquitin-conjugating enzyme]-L-cysteine + N(6)-ubiquitinyl-[acceptor protein]-L-lysine.. Its pathway is protein modification; protein ubiquitination. Functionally, E3 ubiquitin-protein ligase that may be involved in xylem development. The chain is Transmembrane E3 ubiquitin-protein ligase FLY2 from Arabidopsis thaliana (Mouse-ear cress).